The following is a 270-amino-acid chain: Carboxy-S-adenosyl-L-methionine synthase (270 aa).

S-adenosyl-L-methionine-binding positions include Tyr-65, 90-92, 143-144, Asn-158, and Arg-225; these read GCS and DI.

Belongs to the class I-like SAM-binding methyltransferase superfamily. Cx-SAM synthase family. Homodimer.

It catalyses the reaction prephenate + S-adenosyl-L-methionine = carboxy-S-adenosyl-L-methionine + 3-phenylpyruvate + H2O. In terms of biological role, catalyzes the conversion of S-adenosyl-L-methionine (SAM) to carboxy-S-adenosyl-L-methionine (Cx-SAM). The chain is Carboxy-S-adenosyl-L-methionine synthase from Chromohalobacter salexigens (strain ATCC BAA-138 / DSM 3043 / CIP 106854 / NCIMB 13768 / 1H11).